Reading from the N-terminus, the 100-residue chain is uncharacterized protein (100 aa).

2 consecutive transmembrane segments (helical) span residues 50-70 and 75-95; these read LLIF…FSLF and DVFL…SPEV.

The protein localises to the membrane. This is an uncharacterized protein from Saccharomyces cerevisiae (strain ATCC 204508 / S288c) (Baker's yeast).